The following is a 463-amino-acid chain: Asparagine--tRNA ligase (463 aa).

Belongs to the class-II aminoacyl-tRNA synthetase family. In terms of assembly, homodimer.

It localises to the cytoplasm. It catalyses the reaction tRNA(Asn) + L-asparagine + ATP = L-asparaginyl-tRNA(Asn) + AMP + diphosphate + H(+). This is Asparagine--tRNA ligase from Clostridium botulinum (strain ATCC 19397 / Type A).